The following is a 34-amino-acid chain: Beta-theraphotoxin-Pmu1a (34 aa).

Cystine bridges form between cysteine 3/cysteine 18, cysteine 10/cysteine 23, and cysteine 17/cysteine 30. Position 34 is a leucine amide (leucine 34).

Belongs to the neurotoxin 10 (Hwtx-1) family. 34 (Jztx-26) subfamily. In terms of tissue distribution, expressed by the venom gland.

It localises to the secreted. Spider venom neurotoxin that blocks voltage-gated sodium channels Nav1.3/SCN3A and Nav1.8/SCN10A in human (IC(50)=2 uM and IC(50)=4 uM, respectively) and rat (IC(50)=2 uM and IC(50)=2.5 uM, respectively). This Pterinochilus murinus (Mombasa golden starburst baboon spider) protein is Beta-theraphotoxin-Pmu1a.